A 463-amino-acid polypeptide reads, in one-letter code: Lactaldehyde dehydrogenase (463 aa).

220-225 (GSSKVG) serves as a coordination point for NAD(+). Residues Glu-240 and Cys-274 contribute to the active site.

The protein belongs to the aldehyde dehydrogenase family. In terms of assembly, homotetramer.

The catalysed reaction is (S)-lactaldehyde + NAD(+) + H2O = (S)-lactate + NADH + 2 H(+). It participates in cofactor biosynthesis; coenzyme F420 biosynthesis. Involved in F420 biosynthesis through the oxidation of lactaldehyde to lactate. The substrate preference order is propionaldehyde &gt; DL-lactaldehyde, DL-glyceraldehyde &gt; crotonaldehyde &gt; glycolaldehyde &gt; acetaldehyde, acrolein &gt; formaldehyde. No activity was observed towards methylglyoxal or glyceraldehyde-3-phosphate. Has a preference for NAD over NADP. This is Lactaldehyde dehydrogenase from Methanocaldococcus jannaschii (strain ATCC 43067 / DSM 2661 / JAL-1 / JCM 10045 / NBRC 100440) (Methanococcus jannaschii).